The chain runs to 49 residues: MAKFPEAEARIFNKLICMKCNARNPPDATKCRKCGYKGLRPKAREPRGG.

The protein belongs to the eukaryotic ribosomal protein eL40 family.

The chain is Large ribosomal subunit protein eL40 from Methanopyrus kandleri (strain AV19 / DSM 6324 / JCM 9639 / NBRC 100938).